A 150-amino-acid polypeptide reads, in one-letter code: Small ribosomal subunit protein eS19 (150 aa).

This sequence belongs to the eukaryotic ribosomal protein eS19 family. Part of the 30S ribosomal subunit.

In terms of biological role, may be involved in maturation of the 30S ribosomal subunit. This chain is Small ribosomal subunit protein eS19 (rps19e), found in Pyrococcus abyssi (strain GE5 / Orsay).